Here is a 186-residue protein sequence, read N- to C-terminus: ATP synthase subunit delta (186 aa).

Belongs to the ATPase delta chain family. In terms of assembly, F-type ATPases have 2 components, F(1) - the catalytic core - and F(0) - the membrane proton channel. F(1) has five subunits: alpha(3), beta(3), gamma(1), delta(1), epsilon(1). CF(0) has four main subunits: a(1), b(1), b'(1) and c(10-14). The alpha and beta chains form an alternating ring which encloses part of the gamma chain. F(1) is attached to F(0) by a central stalk formed by the gamma and epsilon chains, while a peripheral stalk is formed by the delta, b and b' chains.

The protein resides in the cell inner membrane. F(1)F(0) ATP synthase produces ATP from ADP in the presence of a proton or sodium gradient. F-type ATPases consist of two structural domains, F(1) containing the extramembraneous catalytic core and F(0) containing the membrane proton channel, linked together by a central stalk and a peripheral stalk. During catalysis, ATP synthesis in the catalytic domain of F(1) is coupled via a rotary mechanism of the central stalk subunits to proton translocation. Functionally, this protein is part of the stalk that links CF(0) to CF(1). It either transmits conformational changes from CF(0) to CF(1) or is implicated in proton conduction. The chain is ATP synthase subunit delta from Cereibacter sphaeroides (strain ATCC 17025 / ATH 2.4.3) (Rhodobacter sphaeroides).